Here is a 288-residue protein sequence, read N- to C-terminus: MVLEIFRKPKYVTVRPEKTETTQGNERRDIPEGLWVKCSRCNEILYTKELDKNFKVCHKCNFHFRLNAQERIHMTLDEGSFQERDNELITLNPLNFPDYQEKIQSAQKATELKEAVVTGEGTIGGNPVVIGVMDSHFIMGSMGSVVGEKIARAIERAIEKKLPVVLFSTSGGARMQEGILSLMQMAKTAAALAKLDEAGLLYVAVLTDPTTGGVTASFASLGDIIIAEPGALIGFTGPRVIEQTIRQKLPEGFQRAEFLRKHGMVDMIVNRPQLKDTLANILSLHGTN.

The region spanning 34 to 288 is the CoA carboxyltransferase N-terminal domain; that stretch reads LWVKCSRCNE…ANILSLHGTN (255 aa). Positions 38, 41, 57, and 60 each coordinate Zn(2+). The C4-type zinc-finger motif lies at 38-60; sequence CSRCNEILYTKELDKNFKVCHKC.

It belongs to the AccD/PCCB family. Acetyl-CoA carboxylase is a heterohexamer composed of biotin carboxyl carrier protein (AccB), biotin carboxylase (AccC) and two subunits each of ACCase subunit alpha (AccA) and ACCase subunit beta (AccD). Zn(2+) is required as a cofactor.

It localises to the cytoplasm. It catalyses the reaction N(6)-carboxybiotinyl-L-lysyl-[protein] + acetyl-CoA = N(6)-biotinyl-L-lysyl-[protein] + malonyl-CoA. It functions in the pathway lipid metabolism; malonyl-CoA biosynthesis; malonyl-CoA from acetyl-CoA: step 1/1. Component of the acetyl coenzyme A carboxylase (ACC) complex. Biotin carboxylase (BC) catalyzes the carboxylation of biotin on its carrier protein (BCCP) and then the CO(2) group is transferred by the transcarboxylase to acetyl-CoA to form malonyl-CoA. This chain is Acetyl-coenzyme A carboxylase carboxyl transferase subunit beta, found in Desulforamulus reducens (strain ATCC BAA-1160 / DSM 100696 / MI-1) (Desulfotomaculum reducens).